The chain runs to 682 residues: Potassium-transporting ATPase ATP-binding subunit (682 aa).

Transmembrane regions (helical) follow at residues 34–54 (PVMF…IAMA), 62–82 (ALFS…ANFA), 219–239 (IALT…TATL), and 254–274 (VLVA…LSAI). The active-site 4-aspartylphosphate intermediate is the Asp307. ATP-binding positions include Asp344, Glu348, 377–384 (FTAQSRMS), and Lys395. 2 residues coordinate Mg(2+): Asp518 and Asp522. The next 3 helical transmembrane spans lie at 588 to 608 (FAII…LNIM), 616 to 636 (AILS…PLAL), and 656 to 676 (IYGL…DLLL).

This sequence belongs to the cation transport ATPase (P-type) (TC 3.A.3) family. Type IA subfamily. The system is composed of three essential subunits: KdpA, KdpB and KdpC.

Its subcellular location is the cell inner membrane. It carries out the reaction K(+)(out) + ATP + H2O = K(+)(in) + ADP + phosphate + H(+). Functionally, part of the high-affinity ATP-driven potassium transport (or Kdp) system, which catalyzes the hydrolysis of ATP coupled with the electrogenic transport of potassium into the cytoplasm. This subunit is responsible for energy coupling to the transport system and for the release of the potassium ions to the cytoplasm. This Shigella sonnei (strain Ss046) protein is Potassium-transporting ATPase ATP-binding subunit.